A 205-amino-acid chain; its full sequence is LexA repressor (205 aa).

The H-T-H motif DNA-binding region spans 28 to 48 (RAEIARRLGFKSANAAEEHLK). Catalysis depends on for autocatalytic cleavage activity residues Ser-122 and Lys-159.

The protein belongs to the peptidase S24 family. As to quaternary structure, homodimer.

It carries out the reaction Hydrolysis of Ala-|-Gly bond in repressor LexA.. Functionally, represses a number of genes involved in the response to DNA damage (SOS response), including recA and lexA. In the presence of single-stranded DNA, RecA interacts with LexA causing an autocatalytic cleavage which disrupts the DNA-binding part of LexA, leading to derepression of the SOS regulon and eventually DNA repair. This is LexA repressor from Shewanella loihica (strain ATCC BAA-1088 / PV-4).